Consider the following 362-residue polypeptide: sn-glycerol-3-phosphate import ATP-binding protein UgpC (362 aa).

Residues 4-235 (LSFRNVKKTY…PASTFVAGFI (232 aa)) enclose the ABC transporter domain. An ATP-binding site is contributed by 37–44 (GPSGCGKS).

The protein belongs to the ABC transporter superfamily. sn-glycerol-3-phosphate importer (TC 3.A.1.1.3) family. In terms of assembly, the complex is composed of two ATP-binding proteins (UgpC), two transmembrane proteins (UgpA and UgpE) and a solute-binding protein (UgpB).

It is found in the cell inner membrane. The enzyme catalyses sn-glycerol 3-phosphate(out) + ATP + H2O = sn-glycerol 3-phosphate(in) + ADP + phosphate + H(+). Its function is as follows. Part of the ABC transporter complex UgpBAEC involved in sn-glycerol-3-phosphate (G3P) import. Responsible for energy coupling to the transport system. This chain is sn-glycerol-3-phosphate import ATP-binding protein UgpC, found in Bordetella pertussis (strain Tohama I / ATCC BAA-589 / NCTC 13251).